The sequence spans 362 residues: Chorismate synthase (362 aa).

2 residues coordinate NADP(+): Arg48 and Arg54. Residues 125 to 127, 238 to 239, Gly278, 293 to 297, and Arg319 each bind FMN; these read RSS, NA, and KPTSS.

Belongs to the chorismate synthase family. In terms of assembly, homotetramer. FMNH2 serves as cofactor.

The enzyme catalyses 5-O-(1-carboxyvinyl)-3-phosphoshikimate = chorismate + phosphate. It functions in the pathway metabolic intermediate biosynthesis; chorismate biosynthesis; chorismate from D-erythrose 4-phosphate and phosphoenolpyruvate: step 7/7. Its function is as follows. Catalyzes the anti-1,4-elimination of the C-3 phosphate and the C-6 proR hydrogen from 5-enolpyruvylshikimate-3-phosphate (EPSP) to yield chorismate, which is the branch point compound that serves as the starting substrate for the three terminal pathways of aromatic amino acid biosynthesis. This reaction introduces a second double bond into the aromatic ring system. The protein is Chorismate synthase of Aeromonas salmonicida (strain A449).